Reading from the N-terminus, the 3421-residue chain is Large tegument protein deneddylase (3421 aa).

The tract at residues 1-248 (MAQTLVPANK…SETYLSDEQY (248 aa)) is deubiquitination activity. The 220-residue stretch at 19 to 238 (VVIGYRNQYD…ISATSLLYGI (220 aa)) folds into the Peptidase C76 domain. Catalysis depends on residues C39, D172, and H174. The disordered stretch occupies residues 311–351 (QPTEKRVSLPKRRRPPWTPPTSSENLTTSGNTHTVAGRPSQ). Residues 332–344 (SSENLTTSGNTHT) show a composition bias toward polar residues. The interval 482–508 (LEQFITMIFNRLLSFLVENGARTRTDS) is interaction with inner tegument protein. 2 disordered regions span residues 2407-2442 (ESNP…PTGI) and 2479-3195 (SNAM…RKNI). The span at 2415-2432 (SHDSSQSLDVPSSPSSGS) shows a compositional bias: low complexity. Pro residues-rich tracts occupy residues 2506 to 2516 (TLPPKAAPLPP), 2541 to 2556 (PSVP…PPLP), 2565 to 2577 (GPPP…PPLP), 2586 to 2598 (GPPP…PPLP), and 2607 to 2619 (GPPP…PPLP). Polar residues-rich tracts occupy residues 2620 to 2637 (QSTS…SGKT) and 2778 to 2787 (SDSNVTQSTK). Positions 2797-2857 (PAAAPAKSAA…SAAAPAAAPA (61 aa)) are enriched in low complexity. A compositionally biased stretch (basic and acidic residues) spans 2869-2895 (KPAKDQAKDQAKDQAKDQAKDQAKDQA). The span at 2953 to 2969 (LSASKNSHTTDAVSSDR) shows a compositional bias: polar residues. 2 stretches are compositionally biased toward basic and acidic residues: residues 3023-3040 (RKSD…RRAF) and 3088-3097 (CSEEPKRPTG). Over residues 3120-3146 (IPQNQNTSESPRTTSLKSPTRTVQSSM) the composition is skewed to polar residues. Pro residues predominate over residues 3171–3188 (PQPPPANQTPPPQEPPAP).

This sequence belongs to the herpesviridae large tegument protein family. In terms of assembly, interacts with host CUL1 and CUL4A; these interactions inhibit the E3 ligase activity of cullins. Interacts with inner tegument protein. Interacts with capsid vertex specific component CVC2. Interacts with the major capsid protein/MCP.

It localises to the virion tegument. Its subcellular location is the host cytoplasm. The protein localises to the host nucleus. The catalysed reaction is Thiol-dependent hydrolysis of ester, thioester, amide, peptide and isopeptide bonds formed by the C-terminal Gly of ubiquitin (a 76-residue protein attached to proteins as an intracellular targeting signal).. Large tegument protein that plays multiple roles in the viral cycle. During viral entry, remains associated with the capsid while most of the tegument is detached and participates in the capsid transport toward the host nucleus. Plays a role in the routing of the capsid at the nuclear pore complex and subsequent uncoating. Within the host nucleus, acts as a deneddylase and promotes the degradation of nuclear CRLs (cullin-RING ubiquitin ligases) and thereby stabilizes nuclear CRL substrates, while cytoplasmic CRLs remain unaffected. These modifications prevent host cell cycle S-phase progression and create a favorable environment allowing efficient viral genome replication. Participates later in the secondary envelopment of capsids. Indeed, plays a linker role for the association of the outer viral tegument to the capsids together with the inner tegument protein. The protein is Large tegument protein deneddylase of Equus caballus (Horse).